We begin with the raw amino-acid sequence, 284 residues long: MKIVLISGLSGSGKSVALRQMEDSGYFCVDNLPLEMLPALVSYHIERADETELAVSVDVRSGIDIGQAREQIASLRRLGHRVEVLFVEAEESVLVRRFSETRRGHPLSNQDMTLLESLKKEREWLFPLKEIAYCIDTSKMNAQQLRHAVRQWLKVERTGLLVILESFGFKYGVPNNADFMFDMRSLPNPYYDPELRPYTGMDKPVWDYLDGQPLVQEMVDDIERFVTHWLPRLEDESRSYVTVAIGCTGGQHRSVYIVEKLARRLKGRYELLIRHRQAQNLSDR.

ATP is bound at residue 8 to 15 (GLSGSGKS). 58-61 (DVRS) is a binding site for GTP.

This sequence belongs to the RapZ-like family.

In terms of biological role, displays ATPase and GTPase activities. The protein is Nucleotide-binding protein NMB0738 of Neisseria meningitidis serogroup B (strain ATCC BAA-335 / MC58).